The chain runs to 116 residues: Large ribosomal subunit protein bL17 (116 aa).

It belongs to the bacterial ribosomal protein bL17 family. As to quaternary structure, part of the 50S ribosomal subunit. Contacts protein L32.

The polypeptide is Large ribosomal subunit protein bL17 (Deinococcus geothermalis (strain DSM 11300 / CIP 105573 / AG-3a)).